Reading from the N-terminus, the 155-residue chain is Small ribosomal subunit protein uS9 (155 aa).

It belongs to the universal ribosomal protein uS9 family.

This chain is Small ribosomal subunit protein uS9, found in Allorhizobium ampelinum (strain ATCC BAA-846 / DSM 112012 / S4) (Agrobacterium vitis (strain S4)).